The following is a 222-amino-acid chain: Dense granule protein 3 (222 aa).

2 helical membrane passes run 22 to 42 (LIPF…GGLA) and 162 to 182 (IPGY…RKVL). Residues 219-222 (KKQT) carry the Prevents secretion from ER motif.

Homodimer. Interacts (via N-terminus) with human host CAMLG (via N-terminus).

Its subcellular location is the cytoplasm. It localises to the host endoplasmic reticulum. It is found in the parasitophorous vacuole membrane. In terms of biological role, direct host-parasite interaction occurs at the cytoplasmic faces of the parasitophorous vacuole membrane (PVM) and the host endoplasmic reticulum (ER) membrane via GRA3 and host CAMLG association. Direct insertion of GRA3 ER retrieval motif into the host ER membrane contributes to the host ER recruitment to the PVM. In Toxoplasma gondii, this protein is Dense granule protein 3.